The following is a 215-amino-acid chain: HTH-type transcriptional repressor FabR (215 aa).

An HTH tetR-type domain is found at 10–70 (KTRRSLVEAA…TMVDESGLML (61 aa)). The segment at residues 33 to 52 (SLREVAREAGIAPTSFYRHF) is a DNA-binding region (H-T-H motif).

Homodimer.

The protein resides in the cytoplasm. Its function is as follows. Represses the transcription of fabB, involved in unsaturated fatty acid (UFA) biosynthesis. By controlling UFA production, FabR directly influences the physical properties of the membrane bilayer. The sequence is that of HTH-type transcriptional repressor FabR from Escherichia coli O139:H28 (strain E24377A / ETEC).